Consider the following 330-residue polypeptide: MSTPTVKLNSGYEMPLVGFGLWKVNNDTCADQVYEAIKAGYRLFDGACDYGNEVECGQGVARAIKEGIVKREDLFIVSKLWNSFHDSERVEPICRKQLADWGVDYFDLYIVHFPIALKYVDPAVRYPPGWMSENDKLEFSNTPIHETWAAMEKLVDLKLARSIGVSNFSAQLLMDLLRYARVRPSTLQIEHHPYLTQKRLVDYAQKEGLAVTAYSSFGPLSFLELNLKDAHETPLLFEHPAITAIAEKHGKTPAQVLLRWATQRKVAVIPKSNNPTRLAQNLDVTSFNLEASEIESISALDRNLRFNDPLAITNFVSSLCAQYGFYAPIF.

Tyr-50 serves as the catalytic Proton donor. His-112 contributes to the substrate binding site. NAD(+) contacts are provided by residues 166–167 (SN), 215–224 (SSFGPLSFLE), and 271–281 (KSNNPTRLAQN).

This sequence belongs to the aldo/keto reductase family.

It carries out the reaction xylitol + NAD(+) = D-xylose + NADH + H(+). It catalyses the reaction xylitol + NADP(+) = D-xylose + NADPH + H(+). It participates in carbohydrate metabolism; D-xylose degradation. In terms of biological role, catalyzes the initial reaction in the xylose utilization pathway by reducing D-xylose into xylitol. Xylose is a major component of hemicelluloses such as xylan. Most fungi utilize D-xylose via three enzymatic reactions, xylose reductase (XR), xylitol dehydrogenase (XDH), and xylulokinase, to form xylulose 5-phosphate, which enters pentose phosphate pathway. This chain is Probable NAD(P)H-dependent D-xylose reductase xyl1 (xyl1), found in Aspergillus clavatus (strain ATCC 1007 / CBS 513.65 / DSM 816 / NCTC 3887 / NRRL 1 / QM 1276 / 107).